The primary structure comprises 76 residues: Sec-independent protein translocase protein TatA (76 aa).

Residues 1–21 (MGGLSIWHWLIVLLIVALVFG) form a helical membrane-spanning segment. The tract at residues 40 to 76 (KDGMKEGETPADAQQLPRSGAVDVNAKETTRSDSNKA) is disordered. Positions 64-76 (NAKETTRSDSNKA) are enriched in basic and acidic residues.

It belongs to the TatA/E family. In terms of assembly, the Tat system comprises two distinct complexes: a TatABC complex, containing multiple copies of TatA, TatB and TatC subunits, and a separate TatA complex, containing only TatA subunits. Substrates initially bind to the TatABC complex, which probably triggers association of the separate TatA complex to form the active translocon.

It is found in the cell inner membrane. Its function is as follows. Part of the twin-arginine translocation (Tat) system that transports large folded proteins containing a characteristic twin-arginine motif in their signal peptide across membranes. TatA could form the protein-conducting channel of the Tat system. The polypeptide is Sec-independent protein translocase protein TatA (Burkholderia cenocepacia (strain HI2424)).